Consider the following 96-residue polypeptide: Acylphosphatase (96 aa).

In terms of domain architecture, Acylphosphatase-like spans 9–96 (CAEIYVSGRV…DTFTDFFIKR (88 aa)). Catalysis depends on residues Arg-24 and Asn-42.

It belongs to the acylphosphatase family.

It carries out the reaction an acyl phosphate + H2O = a carboxylate + phosphate + H(+). This chain is Acylphosphatase (acyP), found in Methanococcoides burtonii (strain DSM 6242 / NBRC 107633 / OCM 468 / ACE-M).